The following is a 404-amino-acid chain: Probable tRNA sulfurtransferase (404 aa).

One can recognise a THUMP domain in the interval 61 to 166 (EAVSERLKDV…SGYSYIMCDE (106 aa)). Residues 184 to 185 (LL), 209 to 210 (HF), Arg266, Gly288, and Gln297 each bind ATP.

Belongs to the ThiI family.

It is found in the cytoplasm. The enzyme catalyses [ThiI sulfur-carrier protein]-S-sulfanyl-L-cysteine + a uridine in tRNA + 2 reduced [2Fe-2S]-[ferredoxin] + ATP + H(+) = [ThiI sulfur-carrier protein]-L-cysteine + a 4-thiouridine in tRNA + 2 oxidized [2Fe-2S]-[ferredoxin] + AMP + diphosphate. It carries out the reaction [ThiS sulfur-carrier protein]-C-terminal Gly-Gly-AMP + S-sulfanyl-L-cysteinyl-[cysteine desulfurase] + AH2 = [ThiS sulfur-carrier protein]-C-terminal-Gly-aminoethanethioate + L-cysteinyl-[cysteine desulfurase] + A + AMP + 2 H(+). It participates in cofactor biosynthesis; thiamine diphosphate biosynthesis. Its function is as follows. Catalyzes the ATP-dependent transfer of a sulfur to tRNA to produce 4-thiouridine in position 8 of tRNAs, which functions as a near-UV photosensor. Also catalyzes the transfer of sulfur to the sulfur carrier protein ThiS, forming ThiS-thiocarboxylate. This is a step in the synthesis of thiazole, in the thiamine biosynthesis pathway. The sulfur is donated as persulfide by IscS. The chain is Probable tRNA sulfurtransferase from Bacillus cereus (strain ATCC 14579 / DSM 31 / CCUG 7414 / JCM 2152 / NBRC 15305 / NCIMB 9373 / NCTC 2599 / NRRL B-3711).